We begin with the raw amino-acid sequence, 424 residues long: Serine--tRNA ligase (424 aa).

231–233 (TAE) provides a ligand contact to L-serine. 262-264 (RSE) is a binding site for ATP. Glutamate 285 contributes to the L-serine binding site. 349–352 (EISS) is an ATP binding site. L-serine is bound at residue serine 385.

The protein belongs to the class-II aminoacyl-tRNA synthetase family. Type-1 seryl-tRNA synthetase subfamily. As to quaternary structure, homodimer. The tRNA molecule binds across the dimer.

The protein localises to the cytoplasm. It catalyses the reaction tRNA(Ser) + L-serine + ATP = L-seryl-tRNA(Ser) + AMP + diphosphate + H(+). The catalysed reaction is tRNA(Sec) + L-serine + ATP = L-seryl-tRNA(Sec) + AMP + diphosphate + H(+). The protein operates within aminoacyl-tRNA biosynthesis; selenocysteinyl-tRNA(Sec) biosynthesis; L-seryl-tRNA(Sec) from L-serine and tRNA(Sec): step 1/1. Its function is as follows. Catalyzes the attachment of serine to tRNA(Ser). Is also able to aminoacylate tRNA(Sec) with serine, to form the misacylated tRNA L-seryl-tRNA(Sec), which will be further converted into selenocysteinyl-tRNA(Sec). This is Serine--tRNA ligase from Marinobacter nauticus (strain ATCC 700491 / DSM 11845 / VT8) (Marinobacter aquaeolei).